A 790-amino-acid polypeptide reads, in one-letter code: Lon protease (790 aa).

Positions 23–220 (LPIMPIFHTV…EITLIVNHQL (198 aa)) constitute a Lon N-terminal domain. Residue 372 to 379 (GPPGTGKT) coordinates ATP. The Lon proteolytic domain maps to 608–789 (ISKPGIAMGL…REVLNIALSR (182 aa)). Active-site residues include Ser695 and Lys738.

It belongs to the peptidase S16 family. Homohexamer. Organized in a ring with a central cavity.

The protein localises to the cytoplasm. The catalysed reaction is Hydrolysis of proteins in presence of ATP.. ATP-dependent serine protease that mediates the selective degradation of mutant and abnormal proteins as well as certain short-lived regulatory proteins. Required for cellular homeostasis and for survival from DNA damage and developmental changes induced by stress. Degrades polypeptides processively to yield small peptide fragments that are 5 to 10 amino acids long. Binds to DNA in a double-stranded, site-specific manner. The sequence is that of Lon protease from Syntrophus aciditrophicus (strain SB).